The primary structure comprises 160 residues: Globin CTT-Y (160 aa).

The first 16 residues, 1 to 16, serve as a signal peptide directing secretion; sequence MKVLAIFALCIIGALA. A Globin domain is found at 17-160; the sequence is TPCDDFKIMQ…IRKVINANLE (144 aa). 2 residues coordinate heme b: His-74 and His-109.

Belongs to the globin family.

The polypeptide is Globin CTT-Y (CTT-Y) (Chironomus thummi piger (Midge)).